The following is a 59-amino-acid chain: Large ribosomal subunit protein uL30 (59 aa).

Belongs to the universal ribosomal protein uL30 family. Part of the 50S ribosomal subunit.

In Ectopseudomonas mendocina (strain ymp) (Pseudomonas mendocina), this protein is Large ribosomal subunit protein uL30.